We begin with the raw amino-acid sequence, 211 residues long: Dephospho-CoA kinase (211 aa).

The 203-residue stretch at 2–204 folds into the DPCK domain; sequence IIGLTGSIGM…SGVRRWRRGK (203 aa). Residue 10-15 coordinates ATP; it reads GMGKST.

It belongs to the CoaE family.

The protein resides in the cytoplasm. It catalyses the reaction 3'-dephospho-CoA + ATP = ADP + CoA + H(+). It functions in the pathway cofactor biosynthesis; coenzyme A biosynthesis; CoA from (R)-pantothenate: step 5/5. Its function is as follows. Catalyzes the phosphorylation of the 3'-hydroxyl group of dephosphocoenzyme A to form coenzyme A. The sequence is that of Dephospho-CoA kinase from Rhodospirillum rubrum (strain ATCC 11170 / ATH 1.1.1 / DSM 467 / LMG 4362 / NCIMB 8255 / S1).